A 332-amino-acid polypeptide reads, in one-letter code: Ketol-acid reductoisomerase (NADP(+)) (332 aa).

In terms of domain architecture, KARI N-terminal Rossmann spans 2 to 182 (AKVYYDEDAS…GCTRAGLIET (181 aa)). Residues 25-28 (YGSQ), Ser-51, Ser-53, and 83-86 (DTIQ) each bind NADP(+). Residue His-108 is part of the active site. Position 134 (Gly-134) interacts with NADP(+). The region spanning 183-327 (TFKEETETDL…KELRKMMPWL (145 aa)) is the KARI C-terminal knotted domain. Residues Asp-191, Glu-195, Glu-227, and Glu-231 each contribute to the Mg(2+) site. Ser-252 is a binding site for substrate.

The protein belongs to the ketol-acid reductoisomerase family. Mg(2+) is required as a cofactor.

It carries out the reaction (2R)-2,3-dihydroxy-3-methylbutanoate + NADP(+) = (2S)-2-acetolactate + NADPH + H(+). It catalyses the reaction (2R,3R)-2,3-dihydroxy-3-methylpentanoate + NADP(+) = (S)-2-ethyl-2-hydroxy-3-oxobutanoate + NADPH + H(+). It participates in amino-acid biosynthesis; L-isoleucine biosynthesis; L-isoleucine from 2-oxobutanoate: step 2/4. It functions in the pathway amino-acid biosynthesis; L-valine biosynthesis; L-valine from pyruvate: step 2/4. Its function is as follows. Involved in the biosynthesis of branched-chain amino acids (BCAA). Catalyzes an alkyl-migration followed by a ketol-acid reduction of (S)-2-acetolactate (S2AL) to yield (R)-2,3-dihydroxy-isovalerate. In the isomerase reaction, S2AL is rearranged via a Mg-dependent methyl migration to produce 3-hydroxy-3-methyl-2-ketobutyrate (HMKB). In the reductase reaction, this 2-ketoacid undergoes a metal-dependent reduction by NADPH to yield (R)-2,3-dihydroxy-isovalerate. The chain is Ketol-acid reductoisomerase (NADP(+)) from Persephonella marina (strain DSM 14350 / EX-H1).